The chain runs to 412 residues: Putative competence-damage inducible protein (412 aa).

Belongs to the CinA family.

The protein is Putative competence-damage inducible protein of Bacillus cereus (strain AH820).